The primary structure comprises 338 residues: Trace amine-associated receptor 9 (338 aa).

Residues 1-23 (MELCYENVNGSCIKSSYSPWPRA) are Extracellular-facing. Asn9 carries N-linked (GlcNAc...) asparagine glycosylation. Intrachain disulfides connect Cys12/Cys176 and Cys95/Cys180. Residues 24 to 48 (ILYAVLGLGALLAVFGNLLVITAIL) traverse the membrane as a helical segment. The Cytoplasmic portion of the chain corresponds to 49 to 58 (HFKQLHTPTN). Residues 59–80 (FLVASLACADFLVGVTVMPFST) form a helical membrane-spanning segment. At 81-95 (VRSVEGCWYFGDTYC) the chain is on the extracellular side. The chain crosses the membrane as a helical span at residues 96–118 (KFHTCFDTSFCFASLFHLCCISI). Residues Asp102 and Thr103 each contribute to the spermidine site. The Cytoplasmic segment spans residues 119–138 (DRYVAVTDPLTYPTKFTISV). A helical membrane pass occupies residues 139-160 (SGVCIALSWFFSVTYSFSIFYT). Topologically, residues 161 to 186 (GANEEGIEELVVALTCVGGCQAPLNQ) are extracellular. The tract at residues 164 to 177 (EEGIEELVVALTCV) is extracellular Loop 2 (ECL2). The chain crosses the membrane as a helical span at residues 187-208 (NWVLLCFLLFFLPTVVMVFLYG). Residues 209–246 (RIFLVAKQQARKIEGSANQPQASSESYKERVARRERKA) lie on the Cytoplasmic side of the membrane. Residues 247-270 (AKTLGIAMAAFLVSWLPYIIDAVI) traverse the membrane as a helical segment. Residues 271-283 (DAYMNFITPAYVY) lie on the Extracellular side of the membrane. The helical transmembrane segment at 284–304 (EILVWCVYYNSAMNPLIYAFF) threads the bilayer. At 305 to 338 (YPWFRKAIKLIVSGKVFRADSSRTNLFSEEAGAG) the chain is on the cytoplasmic side.

The protein belongs to the G-protein coupled receptor 1 family. As to expression, mainly expressed in neurons of the olfactory epithelium. Also expressed in the intestine.

The protein localises to the cell membrane. Its function is as follows. Olfactory receptor specific for trace amines, such as triethylamine, N-methylpiperidine, N,N-dimethylcyclohexylamine (DMCHA), beta-phenylethylamine (beta-PEA), cadaverine (CAD) and polyamines such as spermidine. Trace amine compounds are enriched in animal body fluids and act on trace amine-associated receptors (TAARs) to elicit both intraspecific and interspecific innate behaviors. Trace amine-binding causes a conformation change that triggers signaling via G(s)-class of G alpha proteins (GNAL or GNAS). In mature olfactory sensory neurons, Taar9 is coupled with GNAL/G(olf)G alpha protein and mediates activation of adenylate cyclase activity to activate cAMP signaling and eventually transmit odorant signals to achieve membrane depolarization. In immature olfactory sensory neurons, Taar9 is coupled with GNAS/G(s) G alpha proteins. The chain is Trace amine-associated receptor 9 from Rattus norvegicus (Rat).